The sequence spans 684 residues: Glycine--tRNA ligase beta subunit (684 aa).

This sequence belongs to the class-II aminoacyl-tRNA synthetase family. In terms of assembly, tetramer of two alpha and two beta subunits.

It localises to the cytoplasm. The catalysed reaction is tRNA(Gly) + glycine + ATP = glycyl-tRNA(Gly) + AMP + diphosphate. The chain is Glycine--tRNA ligase beta subunit from Pseudomonas fluorescens (strain SBW25).